Reading from the N-terminus, the 299-residue chain is Oxygen-dependent coproporphyrinogen-III oxidase (299 aa).

Ser92 is a binding site for substrate. A divalent metal cation contacts are provided by His96 and His106. The active-site Proton donor is the His106. 108-110 (NVR) serves as a coordination point for substrate. A divalent metal cation-binding residues include His145 and His175. Residues 240–275 (YVEFNLVWDRGTLFGLQTGGRTESILMSMPPLVRWE) form an important for dimerization region. 258 to 260 (GGR) provides a ligand contact to substrate.

It belongs to the aerobic coproporphyrinogen-III oxidase family. Homodimer. It depends on a divalent metal cation as a cofactor.

The protein localises to the cytoplasm. The catalysed reaction is coproporphyrinogen III + O2 + 2 H(+) = protoporphyrinogen IX + 2 CO2 + 2 H2O. The protein operates within porphyrin-containing compound metabolism; protoporphyrin-IX biosynthesis; protoporphyrinogen-IX from coproporphyrinogen-III (O2 route): step 1/1. In terms of biological role, involved in the heme biosynthesis. Catalyzes the aerobic oxidative decarboxylation of propionate groups of rings A and B of coproporphyrinogen-III to yield the vinyl groups in protoporphyrinogen-IX. This Salmonella choleraesuis (strain SC-B67) protein is Oxygen-dependent coproporphyrinogen-III oxidase.